Consider the following 449-residue polypeptide: Elongation factor 1-alpha C (449 aa).

In terms of domain architecture, tr-type G spans 5–234 (KQHVSIVVIG…DACDPPKRPV (230 aa)). Positions 14–21 (GHVDSGKS) are G1. GTP is bound at residue 14–21 (GHVDSGKS). K55 bears the N6,N6-dimethyllysine mark. A G2 region spans residues 70-74 (GITID). K79 is subject to N6,N6,N6-trimethyllysine. The segment at 91–94 (DAPG) is G3. GTP is bound by residues 91–95 (DAPGH) and 153–156 (NKMD). A G4 region spans residues 153-156 (NKMD). At K187 the chain carries N6,N6,N6-trimethyllysine. A G5 region spans residues 194-196 (SGW). K265 bears the N6-methyllysine mark. Residues K310 and K400 each carry the N6,N6,N6-trimethyllysine modification.

It belongs to the TRAFAC class translation factor GTPase superfamily. Classic translation factor GTPase family. EF-Tu/EF-1A subfamily.

It is found in the cytoplasm. Functionally, this protein promotes the GTP-dependent binding of aminoacyl-tRNA to the A-site of ribosomes during protein biosynthesis. The protein is Elongation factor 1-alpha C (TEF-C) of Porphyra purpurea (Red seaweed).